The chain runs to 227 residues: Ribosomal RNA large subunit methyltransferase E (227 aa).

Positions 78, 80, 103, 119, and 143 each coordinate S-adenosyl-L-methionine. The active-site Proton acceptor is the K183.

Belongs to the class I-like SAM-binding methyltransferase superfamily. RNA methyltransferase RlmE family.

The protein localises to the cytoplasm. The catalysed reaction is uridine(2552) in 23S rRNA + S-adenosyl-L-methionine = 2'-O-methyluridine(2552) in 23S rRNA + S-adenosyl-L-homocysteine + H(+). In terms of biological role, specifically methylates the uridine in position 2552 of 23S rRNA at the 2'-O position of the ribose in the fully assembled 50S ribosomal subunit. The sequence is that of Ribosomal RNA large subunit methyltransferase E from Rickettsia conorii (strain ATCC VR-613 / Malish 7).